Reading from the N-terminus, the 218-residue chain is Thiopurine S-methyltransferase (218 aa).

S-adenosyl-L-methionine contacts are provided by tryptophan 10, leucine 45, glutamate 66, and arginine 123.

It belongs to the class I-like SAM-binding methyltransferase superfamily. TPMT family.

The protein resides in the cytoplasm. The catalysed reaction is S-adenosyl-L-methionine + a thiopurine = S-adenosyl-L-homocysteine + a thiopurine S-methylether.. The sequence is that of Thiopurine S-methyltransferase from Pseudomonas fluorescens (strain SBW25).